The following is a 514-amino-acid chain: WD repeat-containing protein 26 (514 aa).

The CTLH domain occupies 9-84; that stretch reads EHPSATKFRN…EYLEDGKVLE (76 aa). 6 WD repeats span residues 206 to 245, 252 to 291, 297 to 337, 377 to 416, 419 to 461, and 464 to 504; these read EHCN…HLLK, GHAY…GELR, SHED…DSWE, QEDH…LVRK, GVTQ…PIAE, and GHTR…DHQN.

As to quaternary structure, forms homooligomers. Identified in the CTLH complex that contains GID4, RANBP9 and/or RANBP10, MKLN1, MAEA, RMND5A (or alternatively its paralog RMND5B), GID8, ARMC8, WDR26 and YPEL5. Within this complex, MAEA, RMND5A (or alternatively its paralog RMND5B), GID8, WDR26, and RANBP9 and/or RANBP10 form the catalytic core, while GID4, MKLN1, ARMC8 and YPEL5 have ancillary roles. Interacts with DDB1-CUL4A/B E3 ligase complexes. Forms a complex composed of at least WDR26, a G-beta:gamma unit, and PLCB2. Interacts with AXIN1.

The protein localises to the cytoplasm. It localises to the nucleus. Its subcellular location is the mitochondrion. Functionally, G-beta-like protein involved in cell signal transduction. Acts as a negative regulator in MAPK signaling pathway. Functions as a scaffolding protein to promote G beta:gamma-mediated PLCB2 plasma membrane translocation and subsequent activation in leukocytes. Core component of the CTLH E3 ubiquitin-protein ligase complex that selectively accepts ubiquitin from UBE2H and mediates ubiquitination and subsequent proteasomal degradation of the transcription factor HBP1. Acts as a negative regulator of the canonical Wnt signaling pathway through preventing ubiquitination of beta-catenin CTNNB1 by the beta-catenin destruction complex, thus negatively regulating CTNNB1 degradation. Protects cells from oxidative stress-induced apoptosis via the down-regulation of AP-1 transcriptional activity as well as by inhibiting cytochrome c release from mitochondria. Also protects cells by promoting hypoxia-mediated autophagy and mitophagy. The chain is WD repeat-containing protein 26 (Wdr26) from Rattus norvegicus (Rat).